We begin with the raw amino-acid sequence, 72 residues long: Translation initiation factor IF-1 (72 aa).

The S1-like domain maps to 1-72 (MAKEETIQMQ…TRARITFRTK (72 aa)).

It belongs to the IF-1 family. As to quaternary structure, component of the 30S ribosomal translation pre-initiation complex which assembles on the 30S ribosome in the order IF-2 and IF-3, IF-1 and N-formylmethionyl-tRNA(fMet); mRNA recruitment can occur at any time during PIC assembly.

It is found in the cytoplasm. Its function is as follows. One of the essential components for the initiation of protein synthesis. Stabilizes the binding of IF-2 and IF-3 on the 30S subunit to which N-formylmethionyl-tRNA(fMet) subsequently binds. Helps modulate mRNA selection, yielding the 30S pre-initiation complex (PIC). Upon addition of the 50S ribosomal subunit IF-1, IF-2 and IF-3 are released leaving the mature 70S translation initiation complex. The protein is Translation initiation factor IF-1 of Nitrosomonas eutropha (strain DSM 101675 / C91 / Nm57).